A 547-amino-acid polypeptide reads, in one-letter code: Inositol-tetrakisphosphate 1-kinase 6 (547 aa).

Lys-263 contributes to the 1D-myo-inositol 1,3,4-trisphosphate binding site. The ATP site is built by Arg-317 and Lys-370. The ATP-grasp domain maps to 327–539; it reads LEGLSAEGRP…FWDAIKQSYE (213 aa). Positions 381 and 415 each coordinate 1D-myo-inositol 1,3,4-trisphosphate. ATP-binding positions include 404–415, Ser-430, and Ser-450; that span reads QEYIDHGSKIFK. Mg(2+) contacts are provided by Asp-497, Asp-511, and Asn-513. The 1D-myo-inositol 1,3,4-trisphosphate site is built by Asn-513 and Ser-517.

It belongs to the ITPK1 family. As to quaternary structure, monomer. It depends on Mg(2+) as a cofactor.

The catalysed reaction is 1D-myo-inositol 3,4,5,6-tetrakisphosphate + ATP = 1D-myo-inositol 1,3,4,5,6-pentakisphosphate + ADP + H(+). It carries out the reaction 1D-myo-inositol 1,3,4-trisphosphate + ATP = 1D-myo-inositol 1,3,4,5-tetrakisphosphate + ADP + H(+). It catalyses the reaction 1D-myo-inositol 1,3,4-trisphosphate + ATP = 1D-myo-inositol 1,3,4,6-tetrakisphosphate + ADP + H(+). Functionally, kinase that can phosphorylate various inositol polyphosphate such as Ins(3,4,5,6)P4 or Ins(1,3,4)P3 and participates in phytic acid biosynthesis in developing seeds. Phytic acid is the primary storage form of phosphorus in cereal grains and other plant seeds. The protein is Inositol-tetrakisphosphate 1-kinase 6 of Oryza sativa subsp. indica (Rice).